The sequence spans 308 residues: Glutamyl-Q tRNA(Asp) synthetase (308 aa).

Residues 19–23 and Glu55 each bind L-glutamate; that span reads RFAPS. Residues 22 to 32 carry the 'HIGH' region motif; that stretch reads PSPSGELHFGS. Residues Cys111, Cys113, Tyr125, and Cys129 each coordinate Zn(2+). 2 residues coordinate L-glutamate: Tyr182 and Arg200. Residues 238–242 carry the 'KMSKS' region motif; it reads KLSKQ. Position 241 (Lys241) interacts with ATP.

It belongs to the class-I aminoacyl-tRNA synthetase family. GluQ subfamily. Zn(2+) is required as a cofactor.

Its function is as follows. Catalyzes the tRNA-independent activation of glutamate in presence of ATP and the subsequent transfer of glutamate onto a tRNA(Asp). Glutamate is transferred on the 2-amino-5-(4,5-dihydroxy-2-cyclopenten-1-yl) moiety of the queuosine in the wobble position of the QUC anticodon. The polypeptide is Glutamyl-Q tRNA(Asp) synthetase (Escherichia coli O6:H1 (strain CFT073 / ATCC 700928 / UPEC)).